The chain runs to 522 residues: Mediator of RNA polymerase II transcription subunit 1.2 (522 aa).

Residues 13-40 (LLEQRKNQELNIEHIDEEMRLEQVRQAA) are a coiled coil.

The protein belongs to the Mediator complex subunit 1 family. Component of the Mediator complex.

The protein resides in the nucleus. In terms of biological role, component of the Mediator complex, a coactivator involved in the regulated transcription of nearly all RNA polymerase II-dependent genes. Mediator functions as a bridge to convey information from gene-specific regulatory proteins to the basal RNA polymerase II transcription machinery. Mediator is recruited to promoters by direct interactions with regulatory proteins and serves as a scaffold for the assembly of a functional preinitiation complex with RNA polymerase II and the general transcription factors. This is Mediator of RNA polymerase II transcription subunit 1.2 (mdt-1.2) from Caenorhabditis elegans.